The primary structure comprises 1188 residues: DNA-directed RNA polymerase subunit beta (1188 aa).

This sequence belongs to the RNA polymerase beta chain family. The RNAP catalytic core consists of 2 alpha, 1 beta, 1 beta' and 1 omega subunit. When a sigma factor is associated with the core the holoenzyme is formed, which can initiate transcription.

It catalyses the reaction RNA(n) + a ribonucleoside 5'-triphosphate = RNA(n+1) + diphosphate. Functionally, DNA-dependent RNA polymerase catalyzes the transcription of DNA into RNA using the four ribonucleoside triphosphates as substrates. In Streptococcus gordonii (strain Challis / ATCC 35105 / BCRC 15272 / CH1 / DL1 / V288), this protein is DNA-directed RNA polymerase subunit beta.